The sequence spans 190 residues: Potassium-transporting ATPase KdpC subunit (190 aa).

A helical transmembrane segment spans residues 10–30 (TFIFLLLITGGVYPLLTTVLG).

This sequence belongs to the KdpC family. The system is composed of three essential subunits: KdpA, KdpB and KdpC.

The protein localises to the cell inner membrane. In terms of biological role, part of the high-affinity ATP-driven potassium transport (or Kdp) system, which catalyzes the hydrolysis of ATP coupled with the electrogenic transport of potassium into the cytoplasm. This subunit acts as a catalytic chaperone that increases the ATP-binding affinity of the ATP-hydrolyzing subunit KdpB by the formation of a transient KdpB/KdpC/ATP ternary complex. The polypeptide is Potassium-transporting ATPase KdpC subunit (Escherichia coli O139:H28 (strain E24377A / ETEC)).